We begin with the raw amino-acid sequence, 179 residues long: Replication restart protein DnaT (179 aa).

Positions 151-168 (SRSSNGGMPQRDINSVSE) are enriched in polar residues. The segment at 151 to 179 (SRSSNGGMPQRDINSVSEPDNHIPPGFRG) is disordered.

Belongs to the DnaT family. Homooligomerizes. Interacts with PriB. Component of the replication restart primosome. Primosome assembly occurs via a 'hand-off' mechanism. PriA binds to replication forks, subsequently PriB then DnaT bind; DnaT then displaces ssDNA to generate the helicase loading substrate.

Its function is as follows. Involved in the restart of stalled replication forks, which reloads the replicative helicase on sites other than the origin of replication. Can function in multiple replication restart pathways. Displaces ssDNA from a PriB-ssDNA complex. Probably forms a spiral filament on ssDNA. The chain is Replication restart protein DnaT from Salmonella heidelberg (strain SL476).